A 275-amino-acid polypeptide reads, in one-letter code: MRNRAFLFGLFFIEYACLVLFAAPTRASLLKSNVESTLAEQWDSNGTRTLQADDSKRISAEERSMEQALLPGAEAMGKTKVPEKAVPRASLGSKLNPLNWPKRIWYKLRLWYARVRLYILKQKTTGENAIGIAAMEGLTPLSLKKLKNEIFHYSSSEPHDKWLIEKDYNSFVKHYFSQFYGLYQNPPVSEIDKWNILVEEMLPLERIAVRMAMDRVGRIVDKGYSIEKLISLDVSPLLYLRLMDSKGVFENVKENKDAIEHLRDYVEAYHKNVMM.

Positions 1-27 are cleaved as a signal peptide; it reads MRNRAFLFGLFFIEYACLVLFAAPTRA. Asn-45 is a glycosylation site (N-linked (GlcNAc...) asparagine). The short motif at 48–63 is the RxLR-dEER element; the sequence is RTLQADDSKRISAEER.

Belongs to the RxLR effector family.

The protein resides in the secreted. Its subcellular location is the host cell membrane. In terms of biological role, secreted effector that completely suppresses the host cell death induced by cell death-inducing proteins. This chain is Secreted RxLR effector protein 153, found in Plasmopara viticola (Downy mildew of grapevine).